The chain runs to 331 residues: ADP-L-glycero-D-manno-heptose-6-epimerase (331 aa).

NADP(+)-binding positions include 11–12 (FI), 32–33 (DN), lysine 39, lysine 54, 75–79 (LGACT), and asparagine 92. Tyrosine 139 functions as the Proton acceptor in the catalytic mechanism. Lysine 143 serves as a coordination point for NADP(+). A substrate-binding site is contributed by asparagine 168. NADP(+) is bound by residues valine 169 and lysine 177. Catalysis depends on lysine 177, which acts as the Proton acceptor. Substrate-binding positions include arginine 179, glutamine 186, 200-203 (FGEH), histidine 213, and tyrosine 292.

Belongs to the NAD(P)-dependent epimerase/dehydratase family. HldD subfamily. Homopentamer. The cofactor is NADP(+).

The catalysed reaction is ADP-D-glycero-beta-D-manno-heptose = ADP-L-glycero-beta-D-manno-heptose. The protein operates within nucleotide-sugar biosynthesis; ADP-L-glycero-beta-D-manno-heptose biosynthesis; ADP-L-glycero-beta-D-manno-heptose from D-glycero-beta-D-manno-heptose 7-phosphate: step 4/4. Its function is as follows. Catalyzes the interconversion between ADP-D-glycero-beta-D-manno-heptose and ADP-L-glycero-beta-D-manno-heptose via an epimerization at carbon 6 of the heptose. This is ADP-L-glycero-D-manno-heptose-6-epimerase from Cupriavidus pinatubonensis (strain JMP 134 / LMG 1197) (Cupriavidus necator (strain JMP 134)).